The following is a 1187-amino-acid chain: DNA excision repair protein CSB (1187 aa).

Positions 31–43 (QATTDPADSSGPT) are enriched in polar residues. 4 disordered regions span residues 31-53 (QATT…PDDA), 75-102 (IKGA…HHGA), 217-242 (KRVE…MEAS), and 265-351 (DSES…EGSD). Composition is skewed to basic and acidic residues over residues 92-101 (KGKDQPDHHG) and 217-230 (KRVE…RQDD). Residues 300 to 319 (KRPRNKTKRPLPGKKWRKAN) are compositionally biased toward basic residues. Residues 339 to 351 (SDDDEDQVTEGSD) are compositionally biased toward acidic residues. Residues 384–580 (WELHCQRAGG…WSLFDFVFPG (197 aa)) enclose the Helicase ATP-binding domain. 397–404 (DEMGLGKT) provides a ligand contact to ATP. The segment at 457–480 (SSSKKSKRSSDSDSEASWDSDQEE) is disordered. Acidic residues predominate over residues 468–480 (SDSEASWDSDQEE). The short motif at 531 to 534 (DEGH) is the DEGH box element. The 161-residue stretch at 716–876 (KVVEQVLKVW…RRFFKARDMK (161 aa)) folds into the Helicase C-terminal domain. Disordered regions lie at residues 916–945 (LYAA…HCPD) and 1095–1116 (GSAS…SSTR). Residues 918–933 (AASATPTTSGTEPSSS) show a composition bias toward low complexity.

The protein belongs to the SNF2/RAD54 helicase family. Homodimer. Binds DNA. As to expression, expressed in proliferating tissues. Highly expressed in shoot apical meristem (SAM). Expressed in roots, young leaves, flag leaves, and panicles. Expressed at very low levels in mature leaves.

Its subcellular location is the nucleus. Essential factor involved in transcription-coupled nucleotide excision repair (TCR) which allows RNA polymerase II-blocking lesions to be rapidly removed from the transcribed strand of active genes. Upon DNA-binding, it locally modifies DNA conformation by wrapping the DNA around itself, thereby modifying the interface between stalled RNA polymerase II and DNA. It is required for transcription-coupled repair complex formation. The sequence is that of DNA excision repair protein CSB from Oryza sativa subsp. japonica (Rice).